The chain runs to 456 residues: Histidine--tRNA ligase (456 aa).

Polar residues predominate over residues 1 to 11 (MTQNENPSAQS). The interval 1–22 (MTQNENPSAQSGAKPEDKARPA) is disordered.

It belongs to the class-II aminoacyl-tRNA synthetase family. As to quaternary structure, homodimer.

The protein localises to the cytoplasm. The catalysed reaction is tRNA(His) + L-histidine + ATP = L-histidyl-tRNA(His) + AMP + diphosphate + H(+). This chain is Histidine--tRNA ligase, found in Cupriavidus pinatubonensis (strain JMP 134 / LMG 1197) (Cupriavidus necator (strain JMP 134)).